Here is a 318-residue protein sequence, read N- to C-terminus: E3 ubiquitin-protein ligase NRDP1 (318 aa).

The RING-type; degenerate zinc finger occupies 18-57; sequence CPICSGVLEEPVRAPHCEHAFCNACITQWFAQQQICPVDR. The SIAH-type; degenerate zinc-finger motif lies at 78–138; it reads KLQISCDNAG…MPNHNCIKHL (61 aa).

It carries out the reaction S-ubiquitinyl-[E2 ubiquitin-conjugating enzyme]-L-cysteine + [acceptor protein]-L-lysine = [E2 ubiquitin-conjugating enzyme]-L-cysteine + N(6)-ubiquitinyl-[acceptor protein]-L-lysine.. Its pathway is protein modification; protein ubiquitination. In terms of biological role, acts as E3 ubiquitin-protein ligase and regulates the degradation of target proteins. This Danio rerio (Zebrafish) protein is E3 ubiquitin-protein ligase NRDP1 (rnf41).